Consider the following 496-residue polypeptide: MTRGARLRSDARAQLNQLSLDGGTGSGQKGKCEEFPSSLSSVSPGLEAAALLLAVTMDPLETPIKDGILYQQHVKFGKKCWRKVWALLYAGGPSGVARLESWEVRDGGLGAAGDRSAGPGRRGERRVIRLADCVSVLPADGESCPRDTGAFLLTTTERSHLLAAQHRQAWMGPICQLAFPGTGEASSGSTDAQSPKRGLVPMEENSIYSSWQEVGEFPVVVQRTEAATRCQLKGPALLVLGPDAIQLREAKGTQALYSWPYHFLRKFGSDKGVFSFEAGRRCHSGEGLFAFSTPCAPDLCRAVAGAIARQRERLPELTRPQPCPLPRATSLPSLDTPGELREMPPGPEPPTSRKMHLAEPGPQSLPLLLGPEPNDLASGLYASVCKRASGPPGNEHLYENLCVLEASPTLHGGEPEPHEGPGSRSPTTSPIYHNGQDLSWPGPANDSTLEAQYRRLLELDQVEGTGRPDPQAGFKAKLVTLLSRERRKGPAPCDRP.

The interval 18-38 (LSLDGGTGSGQKGKCEEFPSS) is disordered. Residues 63 to 179 (PIKDGILYQQ…WMGPICQLAF (117 aa)) form the PH domain. S194 bears the Phosphoserine mark. Residues 213-317 (EVGEFPVVVQ…ARQRERLPEL (105 aa)) enclose the IRS-type PTB domain. The segment at 313-363 (RLPELTRPQPCPLPRATSLPSLDTPGELREMPPGPEPPTSRKMHLAEPGPQ) is disordered. 2 positions are modified to phosphoserine: S330 and S364. Position 381 is a phosphotyrosine (Y381). Positions 408–447 (PTLHGGEPEPHEGPGSRSPTTSPIYHNGQDLSWPGPANDS) are disordered. S425 bears the Phosphoserine mark.

Belongs to the DOK family. Type A subfamily. In terms of assembly, on tyrosine phosphorylation, interacts with CSK and INPP5D/SHIP1 via their SH2 domains. Both Tyr-381 and Tyr-398 are required for interaction with INPP5D. Only Tyr-381 is required for interaction with CSK. Binds ABL1 through the PTB domain and in a kinase-dependent manner. Does not interact with RasGAP. Constitutively tyrosine-phosphorylated. In terms of processing, on IL2 stimulation, phosphorylated on C-terminal tyrosine residues possibly by Src kinases. Can also be phosphorylated by ABL1 kinase. In terms of tissue distribution, expressed in spleen.

The protein resides in the cytoplasm. The protein localises to the cell membrane. In terms of biological role, DOK proteins are enzymatically inert adaptor or scaffolding proteins. They provide a docking platform for the assembly of multimolecular signaling complexes. DOK3 is a negative regulator of JNK signaling in B-cells through interaction with INPP5D/SHIP1. May modulate ABL1 function. The protein is Docking protein 3 (DOK3) of Homo sapiens (Human).